Consider the following 224-residue polypeptide: MASSGLSSRRSIMASRLTASAEAVNEPRRGAVVSRRVEYDEESLAGAGGESRYEVFINHRGVDTKRTVARLLYDRLAQAGLRGFLDNMSMRPGDRLEERIGSAIRECTVAVAIFSPSYCDSEYCLRELAMLVESRKAIIPIFYDIKPSDLLLPQAVADSEVYLPRDLERFKFALREAKHTVGITYDSATGDMAELVSAAADAVMYNMEKMETVQRRETMILSRL.

Positions 51–178 constitute a TIR domain; it reads SRYEVFINHR…RFKFALREAK (128 aa). NAD(+)-binding positions include 60-65 and glycine 93; that span reads RGVDTK. The active site involves glutamate 127.

Homodimer.

The catalysed reaction is NAD(+) + H2O = ADP-D-ribose + nicotinamide + H(+). It carries out the reaction NADP(+) + H2O = ADP-D-ribose 2'-phosphate + nicotinamide + H(+). It catalyses the reaction NAD(+) = 2'cADPR + nicotinamide + H(+). An NAD(+) hydrolase (NADase). Upon activation catalyzes cleavage of NAD(+) into ADP-D-ribose (ADPR) and nicotinamide; NAD(+) cleavage triggers a defense system that promotes cell death. In addition to ADPR, also generates a cyclization variant of cyclic ADPR termed v-cADPR (2'cADPR). Also hydrolyzes NADP(+), but not other NAD(+)-related molecules. v-cADPR activates ThsA, an NAD(+) hydrolase in B.cereus (AC J8G6Z1). Probably makes 2'cADPR; the cADPR made by this protein is bound by cmTad1 (AC P0DW61) and activates ThsA from B.cereus. Boiling cmTad1 bound to the cyclic nucleotide releases 2'cADPR, strongly suggesting it is the product of this protein. The polypeptide is Probable 2' cyclic ADP-D-ribose synthase BdTIR (Brachypodium distachyon (Purple false brome)).